Reading from the N-terminus, the 204-residue chain is Cardiotrophin-2 (204 aa).

An N-terminal signal peptide occupies residues 1–22; it reads MYCLLATPLCLLSLLLPPLSPA. Asparagine 44 carries an N-linked (GlcNAc...) asparagine glycan.

This sequence belongs to the IL-6 superfamily. Binds to tripartite CNTF receptor complex consisting of CNTF alpha chain, LIFR and IL6ST (in vitro). In terms of tissue distribution, not detected in adult tissues.

Its subcellular location is the secreted. In terms of biological role, increases the platelet count associated with splenomegaly. May have an important role in neuronal precursor development and maturation. In Mus musculus (Mouse), this protein is Cardiotrophin-2 (Ctf2).